The chain runs to 394 residues: Chorismate synthase (394 aa).

The NADP(+) site is built by R42 and R48. Residues 137–139, 258–259, G302, 317–321, and R343 each bind FMN; these read RAS, QA, and KPIAT.

Belongs to the chorismate synthase family. In terms of assembly, homotetramer. The cofactor is FMNH2.

The catalysed reaction is 5-O-(1-carboxyvinyl)-3-phosphoshikimate = chorismate + phosphate. The protein operates within metabolic intermediate biosynthesis; chorismate biosynthesis; chorismate from D-erythrose 4-phosphate and phosphoenolpyruvate: step 7/7. Its function is as follows. Catalyzes the anti-1,4-elimination of the C-3 phosphate and the C-6 proR hydrogen from 5-enolpyruvylshikimate-3-phosphate (EPSP) to yield chorismate, which is the branch point compound that serves as the starting substrate for the three terminal pathways of aromatic amino acid biosynthesis. This reaction introduces a second double bond into the aromatic ring system. In Streptomyces avermitilis (strain ATCC 31267 / DSM 46492 / JCM 5070 / NBRC 14893 / NCIMB 12804 / NRRL 8165 / MA-4680), this protein is Chorismate synthase.